Here is an 87-residue protein sequence, read N- to C-terminus: Large ribosomal subunit protein bL27 (87 aa).

Residues Met-1–Leu-21 are disordered.

Belongs to the bacterial ribosomal protein bL27 family.

The sequence is that of Large ribosomal subunit protein bL27 from Paraburkholderia phytofirmans (strain DSM 17436 / LMG 22146 / PsJN) (Burkholderia phytofirmans).